The primary structure comprises 294 residues: Pyridoxal 5'-phosphate synthase subunit PdxS (294 aa).

Asp24 is a binding site for D-ribose 5-phosphate. Lys81 (schiff-base intermediate with D-ribose 5-phosphate) is an active-site residue. A D-ribose 5-phosphate-binding site is contributed by Gly153. Arg165 is a D-glyceraldehyde 3-phosphate binding site. D-ribose 5-phosphate-binding positions include Gly214 and 235-236; that span reads GS.

The protein belongs to the PdxS/SNZ family. As to quaternary structure, in the presence of PdxT, forms a dodecamer of heterodimers.

The enzyme catalyses aldehydo-D-ribose 5-phosphate + D-glyceraldehyde 3-phosphate + L-glutamine = pyridoxal 5'-phosphate + L-glutamate + phosphate + 3 H2O + H(+). It participates in cofactor biosynthesis; pyridoxal 5'-phosphate biosynthesis. Catalyzes the formation of pyridoxal 5'-phosphate from ribose 5-phosphate (RBP), glyceraldehyde 3-phosphate (G3P) and ammonia. The ammonia is provided by the PdxT subunit. Can also use ribulose 5-phosphate and dihydroxyacetone phosphate as substrates, resulting from enzyme-catalyzed isomerization of RBP and G3P, respectively. This chain is Pyridoxal 5'-phosphate synthase subunit PdxS, found in Geobacillus thermodenitrificans (strain NG80-2).